A 284-amino-acid polypeptide reads, in one-letter code: 2-dehydro-3-deoxyphosphooctonate aldolase (284 aa).

This sequence belongs to the KdsA family.

Its subcellular location is the cytoplasm. It catalyses the reaction D-arabinose 5-phosphate + phosphoenolpyruvate + H2O = 3-deoxy-alpha-D-manno-2-octulosonate-8-phosphate + phosphate. It participates in carbohydrate biosynthesis; 3-deoxy-D-manno-octulosonate biosynthesis; 3-deoxy-D-manno-octulosonate from D-ribulose 5-phosphate: step 2/3. Its pathway is bacterial outer membrane biogenesis; lipopolysaccharide biosynthesis. This is 2-dehydro-3-deoxyphosphooctonate aldolase from Actinobacillus succinogenes (strain ATCC 55618 / DSM 22257 / CCUG 43843 / 130Z).